Consider the following 120-residue polypeptide: Large ribosomal subunit protein bL12 (120 aa).

The segment covering 95 to 112 (KEGVSKEEAEEVQGKLEE) has biased composition (basic and acidic residues). Residues 95 to 120 (KEGVSKEEAEEVQGKLEEAGASVEVK) form a disordered region.

This sequence belongs to the bacterial ribosomal protein bL12 family. Homodimer. Part of the ribosomal stalk of the 50S ribosomal subunit. Forms a multimeric L10(L12)X complex, where L10 forms an elongated spine to which 2 to 4 L12 dimers bind in a sequential fashion. Binds GTP-bound translation factors.

In terms of biological role, forms part of the ribosomal stalk which helps the ribosome interact with GTP-bound translation factors. Is thus essential for accurate translation. The chain is Large ribosomal subunit protein bL12 from Oceanobacillus iheyensis (strain DSM 14371 / CIP 107618 / JCM 11309 / KCTC 3954 / HTE831).